A 176-amino-acid polypeptide reads, in one-letter code: Orotate phosphoribosyltransferase (176 aa).

5-phospho-alpha-D-ribose 1-diphosphate is bound by residues R90, K91, K94, and 116–124 (EDVTTTGGS). 2 residues coordinate orotate: T120 and R148.

Belongs to the purine/pyrimidine phosphoribosyltransferase family. PyrE subfamily. In terms of assembly, homodimer. Requires Mg(2+) as cofactor.

It catalyses the reaction orotidine 5'-phosphate + diphosphate = orotate + 5-phospho-alpha-D-ribose 1-diphosphate. Its pathway is pyrimidine metabolism; UMP biosynthesis via de novo pathway; UMP from orotate: step 1/2. Functionally, catalyzes the transfer of a ribosyl phosphate group from 5-phosphoribose 1-diphosphate to orotate, leading to the formation of orotidine monophosphate (OMP). This chain is Orotate phosphoribosyltransferase, found in Methanocaldococcus jannaschii (strain ATCC 43067 / DSM 2661 / JAL-1 / JCM 10045 / NBRC 100440) (Methanococcus jannaschii).